We begin with the raw amino-acid sequence, 216 residues long: MDFDEKRRILAERLRDELNLSEKVYNAIKKVPRHLFVPERYRTMAYVDTPLPIGYGQTISAPHMVAIMCELLDLREGERVLEIGTGCGYHAAVTAEIVGKRGLVVSVERIPELAEIAKRNLSALGYENVVVIVGDGSLGYEPMAPYDKIYVTASAPDIPKPLLEQLKIGGKMVIPIGETTQFLYVVERDNGVRKWSWGAVRFVPLYGKYGFRPLEE.

The active site involves S60.

This sequence belongs to the methyltransferase superfamily. L-isoaspartyl/D-aspartyl protein methyltransferase family.

Its subcellular location is the cytoplasm. It catalyses the reaction [protein]-L-isoaspartate + S-adenosyl-L-methionine = [protein]-L-isoaspartate alpha-methyl ester + S-adenosyl-L-homocysteine. In terms of biological role, catalyzes the methyl esterification of L-isoaspartyl residues in peptides and proteins that result from spontaneous decomposition of normal L-aspartyl and L-asparaginyl residues. It plays a role in the repair and/or degradation of damaged proteins. The protein is Protein-L-isoaspartate O-methyltransferase 1 (pcm1) of Archaeoglobus fulgidus (strain ATCC 49558 / DSM 4304 / JCM 9628 / NBRC 100126 / VC-16).